A 389-amino-acid polypeptide reads, in one-letter code: MVSVSEIRQAQRAEGPATIMAIGTANPANCVEQSTYPDFYFKITNSEHKVELKEKFQRMCDKSMIKRRYMYLTEEILKENPSVCEYMAPSLDARQDMVVVEVPRLGKEAAVKAIKEWGQPKSKITHLIFCTTSGVDMPGADYQLTKLLGLRPYVKRYMMYQQGCFAGGTVLRLAKDLAENNKGARVLVVCSEVTAVTFRGPSDTHLDSLVGQALFGDGAAALIVGSDPIPEIEKPIFEMVWTAQTIAPDSEGAIDGHLREAGLTFHLLKDVPGIVSKNIDKALVEAFQPLNISDYNSIFWIAHPGGPAILDQVEQKLGLKPEKMKATREVLSEYGNMSSACVLFILDEMRKKSAQAGLKTTGEGLDWGVLFGFGPGLTIETVVLHSVAI.

Residue cysteine 164 is part of the active site.

The protein belongs to the thiolase-like superfamily. Chalcone/stilbene synthases family.

It carries out the reaction (E)-4-coumaroyl-CoA + 3 malonyl-CoA + 3 H(+) = 2',4,4',6'-tetrahydroxychalcone + 3 CO2 + 4 CoA. It participates in secondary metabolite biosynthesis; flavonoid biosynthesis. Its function is as follows. The primary product of this enzyme is 4,2',4',6'-tetrahydroxychalcone (also termed naringenin-chalcone or chalcone) which can under specific conditions spontaneously isomerize into naringenin. The sequence is that of Chalcone synthase 9 (CHS9) from Medicago sativa (Alfalfa).